Here is a 1488-residue protein sequence, read N- to C-terminus: Chromosome partition protein MukB (1488 aa).

An ATP-binding site is contributed by 34–41; that stretch reads GGNGAGKS. Coiled coils occupy residues 326 to 418, 444 to 472, and 509 to 602; these read LEAD…QYNQ, LDTF…QTAH, and RHLA…QRAP. The flexible hinge stretch occupies residues 666 to 783; sequence PGGAEDQRLN…SLPIFGRAAR (118 aa). 3 coiled-coil regions span residues 835–923, 977–1116, and 1209–1265; these read EAEI…AKLE, EMLS…AKAG, and VEAI…LQSV. Residues 1049 to 1074 form a disordered region; the sequence is ADSGAEERARQRRDELHAQLSNNRSR. Positions 1051–1065 are enriched in basic and acidic residues; it reads SGAEERARQRRDELH.

The protein belongs to the SMC family. MukB subfamily. Homodimerization via its hinge domain. Binds to DNA via its C-terminal region. Interacts, and probably forms a ternary complex, with MukE and MukF via its C-terminal region. The complex formation is stimulated by calcium or magnesium. Interacts with tubulin-related protein FtsZ.

It is found in the cytoplasm. It localises to the nucleoid. In terms of biological role, plays a central role in chromosome condensation, segregation and cell cycle progression. Functions as a homodimer, which is essential for chromosome partition. Involved in negative DNA supercoiling in vivo, and by this means organize and compact chromosomes. May achieve or facilitate chromosome segregation by condensation DNA from both sides of a centrally located replisome during cell division. In Salmonella gallinarum (strain 287/91 / NCTC 13346), this protein is Chromosome partition protein MukB.